The primary structure comprises 482 residues: tRNA sulfurtransferase (482 aa).

Positions 61-165 (LAIRDALTRI…DDRLLLIKGR (105 aa)) constitute a THUMP domain. ATP contacts are provided by residues 183 to 184 (LI), Lys-265, Gly-287, and Gln-296. The cysteines at positions 344 and 456 are disulfide-linked. Residues 404 to 482 (FGANDVILDI…GFANVKVYRP (79 aa)) enclose the Rhodanese domain. Cys-456 serves as the catalytic Cysteine persulfide intermediate.

Belongs to the ThiI family.

It is found in the cytoplasm. The catalysed reaction is [ThiI sulfur-carrier protein]-S-sulfanyl-L-cysteine + a uridine in tRNA + 2 reduced [2Fe-2S]-[ferredoxin] + ATP + H(+) = [ThiI sulfur-carrier protein]-L-cysteine + a 4-thiouridine in tRNA + 2 oxidized [2Fe-2S]-[ferredoxin] + AMP + diphosphate. It catalyses the reaction [ThiS sulfur-carrier protein]-C-terminal Gly-Gly-AMP + S-sulfanyl-L-cysteinyl-[cysteine desulfurase] + AH2 = [ThiS sulfur-carrier protein]-C-terminal-Gly-aminoethanethioate + L-cysteinyl-[cysteine desulfurase] + A + AMP + 2 H(+). The protein operates within cofactor biosynthesis; thiamine diphosphate biosynthesis. Functionally, catalyzes the ATP-dependent transfer of a sulfur to tRNA to produce 4-thiouridine in position 8 of tRNAs, which functions as a near-UV photosensor. Also catalyzes the transfer of sulfur to the sulfur carrier protein ThiS, forming ThiS-thiocarboxylate. This is a step in the synthesis of thiazole, in the thiamine biosynthesis pathway. The sulfur is donated as persulfide by IscS. The chain is tRNA sulfurtransferase from Salmonella paratyphi B (strain ATCC BAA-1250 / SPB7).